Here is a 313-residue protein sequence, read N- to C-terminus: Ornithine carbamoyltransferase (313 aa).

Residues 57-60, Q84, R108, and 135-138 contribute to the carbamoyl phosphate site; these read STRT and HPTQ. Residues N167, D231, and 235 to 236 each bind L-ornithine; that span reads SM. Carbamoyl phosphate is bound by residues 272–273 and R300; that span reads CL.

This sequence belongs to the aspartate/ornithine carbamoyltransferase superfamily. OTCase family.

It localises to the cytoplasm. The enzyme catalyses carbamoyl phosphate + L-ornithine = L-citrulline + phosphate + H(+). It participates in amino-acid biosynthesis; L-arginine biosynthesis; L-arginine from L-ornithine and carbamoyl phosphate: step 1/3. In terms of biological role, reversibly catalyzes the transfer of the carbamoyl group from carbamoyl phosphate (CP) to the N(epsilon) atom of ornithine (ORN) to produce L-citrulline. The protein is Ornithine carbamoyltransferase of Pseudothermotoga lettingae (strain ATCC BAA-301 / DSM 14385 / NBRC 107922 / TMO) (Thermotoga lettingae).